The chain runs to 277 residues: Phosphonoacetaldehyde hydrolase-like protein (277 aa).

The protein belongs to the HAD-like hydrolase superfamily. PhnX family.

This Syntrophobacter fumaroxidans (strain DSM 10017 / MPOB) protein is Phosphonoacetaldehyde hydrolase-like protein (phnX2).